We begin with the raw amino-acid sequence, 375 residues long: Amylovoran biosynthesis protein AmsC (375 aa).

9 helical membrane-spanning segments follow: residues 2-22 (AIYWIVSYSILVFCFFELAMI), 31-51 (KILINYFFLIGVFALILFAGI), 93-113 (MVLAWVASCFTHESYFFLLFI), 162-182 (IAFICSLVARNYLLALLFIVL), 208-228 (LPLVLVIASIPLGIIGGKKLF), 256-276 (VFGLANLKNIAFIGAFTLYYF), 287-307 (VYILLIAYSIGAAVRITFSDF), 309-329 (IFGGRVGNLFLHTEPLLFAFL), and 337-357 (LLNFFMLFSITTYYLAYNTIL).

It is found in the cell membrane. The protein operates within glycan metabolism; exopolysaccharide biosynthesis. Involved in the biosynthesis of amylovoran which functions as a virulence factor. In Erwinia amylovora (Fire blight bacteria), this protein is Amylovoran biosynthesis protein AmsC (amsC).